A 172-amino-acid polypeptide reads, in one-letter code: Adenine phosphoribosyltransferase (172 aa).

Belongs to the purine/pyrimidine phosphoribosyltransferase family. In terms of assembly, homodimer.

Its subcellular location is the cytoplasm. The catalysed reaction is AMP + diphosphate = 5-phospho-alpha-D-ribose 1-diphosphate + adenine. It functions in the pathway purine metabolism; AMP biosynthesis via salvage pathway; AMP from adenine: step 1/1. Functionally, catalyzes a salvage reaction resulting in the formation of AMP, that is energically less costly than de novo synthesis. The polypeptide is Adenine phosphoribosyltransferase (Streptococcus agalactiae serotype III (strain NEM316)).